The following is a 113-amino-acid chain: Carrot ABA-induced in somatic embryos 3 (113 aa).

Composition is skewed to basic and acidic residues over residues methionine 1–glutamine 17, glutamate 32–leucine 52, and glycine 65–tyrosine 77. The disordered stretch occupies residues methionine 1–serine 113.

The protein belongs to the small hydrophilic plant seed protein family. In terms of tissue distribution, expressed in embryogenic cells, somatic embryos and seeds at the later stages of development. Not detected in leaves.

This is Carrot ABA-induced in somatic embryos 3 from Daucus carota (Wild carrot).